Consider the following 232-residue polypeptide: Ribonuclease 3 (232 aa).

In terms of domain architecture, RNase III spans 5 to 134 (QTVLKNHFAI…FLGALLLDKD (130 aa)). Glu47 lines the Mg(2+) pocket. Residue Asp51 is part of the active site. Residues Asp120 and Glu123 each coordinate Mg(2+). Glu123 is an active-site residue. The DRBM domain occupies 160–229 (DYKTHLQELL…AKNAVEKGLD (70 aa)).

Belongs to the ribonuclease III family. Homodimer. Mg(2+) is required as a cofactor.

Its subcellular location is the cytoplasm. It carries out the reaction Endonucleolytic cleavage to 5'-phosphomonoester.. Functionally, digests double-stranded RNA. Involved in the processing of primary rRNA transcript to yield the immediate precursors to the large and small rRNAs (23S and 16S). Processes some mRNAs, and tRNAs when they are encoded in the rRNA operon. Processes pre-crRNA and tracrRNA of type II CRISPR loci if present in the organism. The sequence is that of Ribonuclease 3 from Streptococcus pneumoniae (strain Taiwan19F-14).